The primary structure comprises 126 residues: Large ribosomal subunit protein bL17 (126 aa).

The protein belongs to the bacterial ribosomal protein bL17 family. In terms of assembly, part of the 50S ribosomal subunit. Contacts protein L32.

The polypeptide is Large ribosomal subunit protein bL17 (Laribacter hongkongensis (strain HLHK9)).